Reading from the N-terminus, the 408-residue chain is Snake venom metalloproteinase BaP1 (408 aa).

The N-terminal stretch at 1–20 is a signal peptide; sequence MIEVLLVTICLAVFPYQGSS. A propeptide spanning residues 21–191 is cleaved from the precursor; it reads IILESGNVND…KASQSNLTPE (171 aa). The residue at position 192 (Q192) is a Pyrrolidone carboxylic acid. The 197-residue stretch at 198–394 folds into the Peptidase M12B domain; that stretch reads RYIELAVVAD…HNPQCILNKP (197 aa). Cystine bridges form between C309–C389, C349–C373, and C351–C356. A Zn(2+)-binding site is contributed by H334. E335 is an active-site residue. Residues H338 and H344 each contribute to the Zn(2+) site. The propeptide occupies 395–408; the sequence is LLTVSGNELLEAGE.

The protein belongs to the venom metalloproteinase (M12B) family. P-I subfamily. As to quaternary structure, monomer. Requires Zn(2+) as cofactor. Expressed by the venom gland.

It localises to the secreted. With respect to regulation, inhibited by EDTA, partially inhibited by o-phenantropine, and not inhibited by PMSF, pepstatin A, and aprotinin. In terms of biological role, zinc metalloprotease that exhibits a weak hemorrhagic activity (with a minimum hemorrhagic dose of 20 ug by intradermal and intramuscular injection into mice). The basal membrane components collagen (all chains of type IV) (COL4A4), laminin and nidogen are all degraded by this toxin. Rapidly degrades the Aalpha-chain (FGA) of fibrinogen, and later on, degrades the Bbeta-chain (FGB) of fibrinogen. Also activates the complement system, and induces rat neutrophil chemotaxis. Induces edema in mouse food pad and shows a mild myotoxicity. This Bothrops asper (Terciopelo) protein is Snake venom metalloproteinase BaP1.